The chain runs to 240 residues: Protein OPG176 (240 aa).

It belongs to the orthopoxvirus OPG176 family. In terms of assembly, tetramer. Interacts with host MYD88, TRF4, TICAM2 and MAL.

Functionally, BCL2-like protein which disrupts the host immune response by inhibiting the TLR4 signaling pathway leading to NF-kappa-B activation. Acts close to the plasma membrane and targets several host TIR-domain containing adapter proteins including MYD88, TIRAP, TRIF and TICAM2. In turn, blocks the host NF-kappa-B and TRIF-mediated IRF3 activation. The protein is Protein OPG176 (OPG176) of Bos taurus (Bovine).